We begin with the raw amino-acid sequence, 400 residues long: Argininosuccinate synthase (400 aa).

Residues 6–14 (AYSGGLDTS) and alanine 33 each bind ATP. L-citrulline contacts are provided by tyrosine 84 and serine 89. Residue glycine 114 participates in ATP binding. Threonine 116, asparagine 120, and aspartate 121 together coordinate L-aspartate. An L-citrulline-binding site is contributed by asparagine 120. Positions 124, 173, 182, 258, and 270 each coordinate L-citrulline.

The protein belongs to the argininosuccinate synthase family. Type 1 subfamily. Homotetramer.

It localises to the cytoplasm. It catalyses the reaction L-citrulline + L-aspartate + ATP = 2-(N(omega)-L-arginino)succinate + AMP + diphosphate + H(+). It functions in the pathway amino-acid biosynthesis; L-arginine biosynthesis; L-arginine from L-ornithine and carbamoyl phosphate: step 2/3. The protein is Argininosuccinate synthase of Thermus thermophilus (strain ATCC 27634 / DSM 579 / HB8).